Reading from the N-terminus, the 739-residue chain is MTDTTSSTPFVEGRAEQRLNGAIARFNRWPSAPRTVLVVASCVLGAMLLLGIISAPLDLYSQCLFAAVCFLAVLVLRKIPGRLAILALVVLSLVASLRYMFWRLTSTLGFETWVDMFFGYGLVAAEFYALIVLIFGYVQTAWPLRRTPVWLKTEPEEWPTVDVFIPTYNEALSIVKLTIFAAQAMDWPKDKLRVHVLDDGRRDDFREFCRKVGVNYIRRDNNFHAKAGNLNEALKVTDGEYIALFDADHVPTRSFLQVSLGWFLKDPKLAMLQTPHFFFSPDPFEKNLDTFRAVPNEGELFYGLVQDGNDLWNATFFCGSCAVIRREPLLEIGGVAVETVTEDAHTALKLNRLGYNTAYLAIPQAAGLATESLSRHINQRIRWARGMAQIFRTDNPLLGKGLKWGQRICYANAMLHFFYGLPRLVFLTAPLAYLIFGAEIFHASALMIVAYVLPHLVHSSLTNSRIQGRFRHSFWNEVYETVLAWYILPPVLVALVNPKAGGFNVTDKGGIIDKQFFDWKLARPYLVLLAVNLIGLGFGIHQLIWGDASTAVTVAINLTWTLYNLIITSAAVAVASEARQVRSEPRVSAKLPVSIICADGRVLDGTTQDFSQNGFGLMLSDGHSITQGERVQLVLSRNGQDSLFDARVVFSKGAQIGAQFEALSLRQQSELVRLTFSRADTWAASWGAGQPDTPLAALREVGSIGIGGLFTLGRATLHELRLALSRTPTKPLDTLMDKP.

Transmembrane regions (helical) follow at residues 36 to 55 (VLVV…IISA), 59 to 76 (LYSQ…VLVL), 83 to 101 (LAIL…RYMF), and 116 to 138 (MFFG…FGYV). The tract at residues 157 to 250 (EWPTVDVFIP…YIALFDADHV (94 aa)) is catalytic subdomain A. Asp-199 is an active-site residue. Substrate contacts are provided by Asp-246 and Asp-248. Residues 327 to 387 (EPLLEIGGVA…NQRIRWARGM (61 aa)) are catalytic subdomain B. The active site involves Asp-343. The next 4 helical transmembrane spans lie at 417–436 (FFYG…YLIF), 440–462 (IFHA…SSLT), 524–546 (PYLV…LIWG), and 551–573 (AVTV…AAVA). The 98-residue stretch at 580–677 (QVRSEPRVSA…QSELVRLTFS (98 aa)) folds into the PilZ domain.

The protein belongs to the glycosyltransferase 2 family. Requires Mg(2+) as cofactor.

It localises to the cell inner membrane. The enzyme catalyses [(1-&gt;4)-beta-D-glucosyl](n) + UDP-alpha-D-glucose = [(1-&gt;4)-beta-D-glucosyl](n+1) + UDP + H(+). It functions in the pathway glycan metabolism; bacterial cellulose biosynthesis. Its activity is regulated as follows. Activated by bis-(3'-5') cyclic diguanylic acid (c-di-GMP). Its function is as follows. Catalytic subunit of cellulose synthase. It polymerizes uridine 5'-diphosphate glucose to cellulose, which is produced as an extracellular component responsible for the structural integrity and rigidity of self-supporting mats characteristic of the 'wrinkly spreader' phenotype. The protein is Cellulose synthase catalytic subunit [UDP-forming] (bcsA) of Pseudomonas fluorescens (strain SBW25).